A 156-amino-acid chain; its full sequence is Protein-export protein SecB (156 aa).

It belongs to the SecB family. Homotetramer, a dimer of dimers. One homotetramer interacts with 1 SecA dimer.

Its subcellular location is the cytoplasm. Its function is as follows. One of the proteins required for the normal export of preproteins out of the cell cytoplasm. It is a molecular chaperone that binds to a subset of precursor proteins, maintaining them in a translocation-competent state. It also specifically binds to its receptor SecA. This is Protein-export protein SecB from Paraburkholderia xenovorans (strain LB400).